Consider the following 37-residue polypeptide: Large ribosomal subunit protein bL36 (37 aa).

It belongs to the bacterial ribosomal protein bL36 family.

This Leptospira interrogans serogroup Icterohaemorrhagiae serovar copenhageni (strain Fiocruz L1-130) protein is Large ribosomal subunit protein bL36.